Reading from the N-terminus, the 180-residue chain is Negative modulator of initiation of replication (180 aa).

An interaction with DNA region spans residues 115-119 (RTRVY).

Belongs to the SeqA family. In terms of assembly, homodimer. Polymerizes to form helical filaments.

It localises to the cytoplasm. Its function is as follows. Negative regulator of replication initiation, which contributes to regulation of DNA replication and ensures that replication initiation occurs exactly once per chromosome per cell cycle. Binds to pairs of hemimethylated GATC sequences in the oriC region, thus preventing assembly of replication proteins and re-initiation at newly replicated origins. Repression is relieved when the region becomes fully methylated. This Aliivibrio fischeri (strain ATCC 700601 / ES114) (Vibrio fischeri) protein is Negative modulator of initiation of replication.